The following is a 145-amino-acid chain: I-leader protein (145 aa).

It localises to the host cytoplasm. It is found in the host perinuclear region. This Human adenovirus C serotype 2 (HAdV-2) protein is I-leader protein.